The chain runs to 955 residues: Calsyntenin-2 (955 aa).

A signal peptide spans 1–20 (MLPGRLCWVPLLLALGVGSG). Residues 21-831 (SGGGGDSRQR…SIQHSSVVPS (811 aa)) lie on the Extracellular side of the membrane. Cadherin domains are found at residues 44–160 (IETS…APTF) and 161–280 (KEPA…MPLF). N-linked (GlcNAc...) asparagine glycans are attached at residues Asn56 and Asn98. Asn342, Asn374, Asn716, and Asn729 each carry an N-linked (GlcNAc...) asparagine glycan. Residues 832–852 (IATVVIIISVCMLVFVVAMGV) form a helical membrane-spanning segment. The Cytoplasmic segment spans residues 853 to 955 (YRVRIAHQHF…LEWDDSTLPY (103 aa)). The disordered stretch occupies residues 887–955 (PMEKHEGPGH…LEWDDSTLPY (69 aa)). Positions 888 to 898 (MEKHEGPGHGE) are enriched in basic and acidic residues. Acidic residues-rich tracts occupy residues 899–913 (DETE…EEEM) and 920–929 (DDSEEEEEEE).

The protein belongs to the calsyntenin family. Post-translationally, proteolytically processed under normal cellular conditions. A primary zeta-cleavage generates a large extracellular (soluble) N-terminal domain (sAlc) and a short C-terminal transmembrane fragment (CTF1). A secondary cleavage catalyzed by gamma-secretase within the transmembrane domain releases the beta-Alc-gamma chain in the extracellular milieu and produces an intracellular fragment (AlcICD). This processing is strongly suppressed in the tripartite complex formed with APBA2 and APP, which seems to prevent the association with PSEN1. As to expression, restricted to the brain.

It is found in the postsynaptic cell membrane. The protein resides in the endoplasmic reticulum membrane. The protein localises to the golgi apparatus membrane. It localises to the cell projection. Its subcellular location is the dendrite. Postsynaptic adhesion molecule that binds to presynaptic neurexins to mediate synapse formation, and which is involved in learning and memory. Promotes synapse development by acting as a cell adhesion molecule at the postsynaptic membrane, which associates with neurexin-alpha at the presynaptic membrane. The protein is Calsyntenin-2 of Homo sapiens (Human).